A 205-amino-acid chain; its full sequence is DNA-directed RNA polymerase RPB5 homolog (205 aa).

This sequence belongs to the archaeal RpoH/eukaryotic RPB5 RNA polymerase subunit family. In terms of assembly, part of the viral DNA-directed RNA polymerase that consists of 8 polII-like subunits (RPB1, RPB2, RPB3, RPB5, RPB6, RPB7, RPB9, RPB10), a capping enzyme and a termination factor.

It localises to the host cytoplasm. Its subcellular location is the virion. Component of the DNA-directed RNA polymerase (RNAP) that catalyzes the transcription in the cytoplasm of viral DNA into RNA using the four ribonucleoside triphosphates as substrates. The sequence is that of DNA-directed RNA polymerase RPB5 homolog from Ornithodoros (relapsing fever ticks).